Consider the following 992-residue polypeptide: Translation initiation factor IF-2 (992 aa).

2 disordered regions span residues 154-173 (RRLRDEQAAQEAAREREREA) and 338-399 (AAPG…RPES). A tr-type G domain is found at 492–661 (PRAPVVTVMG…LLQAEVLELK (170 aa)). The interval 501 to 508 (GHVDHGKT) is G1. Position 501–508 (501–508 (GHVDHGKT)) interacts with GTP. The tract at residues 526 to 530 (GITQH) is G2. A G3 region spans residues 547–550 (DTPG). GTP contacts are provided by residues 547–551 (DTPGH) and 601–604 (NKID). The tract at residues 601–604 (NKID) is G4. Positions 637 to 639 (SAH) are G5.

It belongs to the TRAFAC class translation factor GTPase superfamily. Classic translation factor GTPase family. IF-2 subfamily.

The protein localises to the cytoplasm. Functionally, one of the essential components for the initiation of protein synthesis. Protects formylmethionyl-tRNA from spontaneous hydrolysis and promotes its binding to the 30S ribosomal subunits. Also involved in the hydrolysis of GTP during the formation of the 70S ribosomal complex. This is Translation initiation factor IF-2 from Polaromonas naphthalenivorans (strain CJ2).